The following is a 90-amino-acid chain: Acylphosphatase (90 aa).

Residues 3-90 (AVHMNASGQV…FEGQDFIVKY (88 aa)) form the Acylphosphatase-like domain. Catalysis depends on residues R18 and N36.

The protein belongs to the acylphosphatase family.

The enzyme catalyses an acyl phosphate + H2O = a carboxylate + phosphate + H(+). In Pediococcus pentosaceus (strain ATCC 25745 / CCUG 21536 / LMG 10740 / 183-1w), this protein is Acylphosphatase (acyP).